The primary structure comprises 360 residues: Homeobox-leucine zipper protein HOX21 (360 aa).

2 disordered regions span residues 25 to 75 (QQAA…SSAQ) and 88 to 126 (MLGK…EKKR). The segment covering 36–55 (HHHHHHHGHHHEQQQHHHHL) has biased composition (basic residues). Over residues 56–68 (GPPPPPPPHPHNP) the composition is skewed to pro residues. Gly residues predominate over residues 97–109 (GDGGGGGDEVNGG). Residues 121–180 (AGEKKRRLNVEQVRTLEKNFELGNKLEPERKMQLARALGLQPRQVAIWFQNRRARWKTKQ) constitute a DNA-binding region (homeobox). Residues 179-223 (KQLEKDYDALKRQLDAVKAENDALLNHNKKLQAEIVALKGREAAS) are leucine-zipper. Disordered regions lie at residues 233 to 278 (EASC…GGGG) and 299 to 328 (GVDI…GNVQ). Residues 234–246 (ASCSNRSENSSEI) are compositionally biased toward polar residues.

Belongs to the HD-ZIP homeobox family. Class I subfamily. Expressed in seedlings, roots, stems, leaf blades and panicles.

The protein localises to the nucleus. In terms of biological role, probable transcription factor. The protein is Homeobox-leucine zipper protein HOX21 (HOX21) of Oryza sativa subsp. indica (Rice).